An 879-amino-acid polypeptide reads, in one-letter code: Leucine--tRNA ligase (879 aa).

The 'HIGH' region motif lies at proline 45–histidine 55. A 'KMSKS' region motif is present at residues lysine 637–serine 641. An ATP-binding site is contributed by lysine 640.

It belongs to the class-I aminoacyl-tRNA synthetase family.

It localises to the cytoplasm. The enzyme catalyses tRNA(Leu) + L-leucine + ATP = L-leucyl-tRNA(Leu) + AMP + diphosphate. The chain is Leucine--tRNA ligase from Xylella fastidiosa (strain M12).